A 348-amino-acid polypeptide reads, in one-letter code: Phosphate acyltransferase (348 aa).

Belongs to the PlsX family. In terms of assembly, homodimer. Probably interacts with PlsY.

The protein resides in the cytoplasm. It catalyses the reaction a fatty acyl-[ACP] + phosphate = an acyl phosphate + holo-[ACP]. The protein operates within lipid metabolism; phospholipid metabolism. Functionally, catalyzes the reversible formation of acyl-phosphate (acyl-PO(4)) from acyl-[acyl-carrier-protein] (acyl-ACP). This enzyme utilizes acyl-ACP as fatty acyl donor, but not acyl-CoA. The chain is Phosphate acyltransferase from Rhizobium rhizogenes (strain K84 / ATCC BAA-868) (Agrobacterium radiobacter).